The following is a 605-amino-acid chain: MAAEADEENCEALYVAGYLALYSKDEGELNITPEIVRSALPPTSKIPINIDHRKDCVVGEVIAIIEDIRGPFFLGIVRCPQLHAVLFEAAHSNFFGNRDSVLSPLERALYLVTNYLPSVSLSSKRLSPNEIPDGNFFTHVALCVVGRRVGTVVNYDCTPESSIEPFRVLSMESKARLLSLVKDYAGLNKVWKVSEDKLAKVLLSTAVNNMLLRDRWDVVAKRRREAGIMGHVYLQASTGYGLARITNVNGVESKLPNAGVINATFHPGGPIYDLALGVGESNEDCEKTVPHLKVTQLCRNDSDMASVAGNASNISPQPPSGVPTGGEFVLIPTAYYSQLLTGQTKNPQVSIGAPNNGQYIVGPYGSPHPPAFPPNTGGYGCPPGHFGGPYGFPGYPPPNRLEMQMSAFMNALAAERGIDLQTPCVNFPDKTDVRRPGKRDFKSMDQRELDSFYSGESQMDGEFPSNIYFPGEPTYITHRRRRVSPSYWQRRHRVSNGQHEELAGVVAKLQQEVTELKSQNGTQMPLSHHTNIPEGTRDPRISILLKQLQSVSGLCSSQNTTSTPHTDTVGQDVNAVEASSKAPLIQGSTADDADMFANQMMVGRC.

Catalysis depends on charge relay system residues H52, S120, and H139. The interaction with pAP stretch occupies residues 326 to 344 (GEFVLIPTAYYSQLLTGQT). The interval 585–605 (IQGSTADDADMFANQMMVGRC) is interaction with major capsid protein.

The protein belongs to the herpesviridae capsid scaffolding protein family. As to quaternary structure, homomultimer. Interacts with major capsid protein. Exists in a monomer-dimer equilibrium with the dimer being the active species. Post-translationally, capsid scaffolding protein is cleaved by assemblin after formation of the spherical procapsid. As a result, the capsid obtains its mature, icosahedral shape. Cleavages occur at two or more sites: release (R-site) and maturation (M-site).

It localises to the host cytoplasm. It is found in the host nucleus. It carries out the reaction Cleaves -Ala-|-Ser- and -Ala-|-Ala- bonds in the scaffold protein.. Acts as a scaffold protein by binding major capsid protein in the cytoplasm, inducing the nuclear localization of both proteins. Multimerizes in the nucleus such as major capsid protein forms the icosahedral T=16 capsid. Autocatalytic cleavage releases the assembly protein, and subsequently abolishes interaction with major capsid protein. Cleavages products are evicted from the capsid before or during DNA packaging. In terms of biological role, protease that plays an essential role in virion assembly within the nucleus. Catalyzes the cleavage of the assembly protein after formation of the spherical procapsid. By that cleavage, the capsid matures and gains its icosahedral shape. The cleavage sites seem to include -Ala-Ser-, -Ala-Ala-, as well as Ala-Thr bonds. Assemblin and cleavages products are evicted from the capsid before or during DNA packaging. Functionally, plays a major role in capsid assembly. Acts as a scaffold protein by binding major capsid protein. Multimerizes in the nucleus such as major capsid protein forms the icosahedral T=16 capsid. Cleaved by assemblin after capsid completion. The cleavages products are evicted from the capsid before or during DNA packaging. The sequence is that of Capsid scaffolding protein (33) from Varicella-zoster virus (strain Dumas) (HHV-3).